We begin with the raw amino-acid sequence, 152 residues long: Ninjurin-1 (152 aa).

Met1 carries the N-acetylmethionine modification. Over residues 1 to 10 (MESGTEEYEL) the composition is skewed to acidic residues. Positions 1 to 29 (MESGTEEYELNGDLRPGSPGSPDALPPRW) are disordered. The Extracellular segment spans residues 1–78 (MESGTEEYEL…EQGNDFAFFV (78 aa)). Ser18 and Ser21 each carry phosphoserine. Residues 26-37 (PPRWGLRNRPIN) form an N-terminal adhesion motif region. Positions 40-69 (HYANKKSAAESMLDIALLMANASQLKAVVE) are required to induce plasma membrane rupture. The segment at 44 to 55 (KKSAAESMLDIA) is helix alpha1. The helix alpha2 stretch occupies residues 58 to 74 (MANASQLKAVVEQGNDF). An N-linked (GlcNAc...) asparagine glycan is attached at Asn60. Residues 79–103 (PLVVLISISLVLQIGVGVLLIFLVK) traverse the membrane as a helical segment. Residues 104–113 (YDLNNPAKHA) are Cytoplasmic-facing. A helical membrane pass occupies residues 114 to 138 (KLDFLNNLATGLVFIIVVVNIFITA). Over 139 to 152 (FGVQKPVMDVAPRQ) the chain is Extracellular.

The protein belongs to the ninjurin family. As to quaternary structure, homodimer; in absence of death stimuli, forms an inactive homodimer. Homooligomer; in response to death stimuli, homooligomerizes into long, highly branched filaments and large, ring-shaped structures in the membrane. Post-translationally, cleaved by MMP9 protease to generate the Secreted ninjurin-1 form. N-linked glycosylation is required for homooligomerization.

The protein resides in the cell membrane. The protein localises to the synaptic cell membrane. It localises to the secreted. Its activity is regulated as follows. In response to death stimuli, homooligomerizes and disrupts membrane integrity by introducing the hydrophilic faces of alpha1 and alpha2 helices into the hydrophobic membrane. Homooligomerization and ability to mediate plasma membrane rupture is inhibited by glycine; it is unclear whether glycine directly or indirectly inhibits homooligomerization. In normal conditions, NINJ1 is autoinhibited via formation of a homodimer: in the inactive homodimer, the alpha1 and alpha2 helices (residues 44-74) form a single transmembrane region without a kink, in which hydrophilic faces of alpha1 and alpha2 helices are sequestered. Functionally, effector of various programmed cell death, such as pyroptosis and necroptosis, which mediates plasma membrane rupture (cytolysis). Oligomerizes in response to death stimuli and forms ring-like structures on the plasma membrane: acts by cutting and shedding membrane disks, like a cookie cutter, leading to membrane damage and loss that cannot be repaired by the cell. Plasma membrane rupture leads to release intracellular molecules named damage-associated molecular patterns (DAMPs) that propagate the inflammatory response. Mechanistically, mediates plasma membrane rupture by introducing hydrophilic faces of 2 alpha helices into the hydrophobic membrane. Induces plasma membrane rupture downstream of Gasdermin (GSDMA, GSDMB, GSDMC, GSDMD, or GSDME) or MLKL during pyroptosis or necroptosis, respectively. Acts as an effector of PANoptosis downstream of CASP1, CASP4, CASP8 and RIPK3. Also induces plasma membrane rupture in response to cell swelling caused by osmotic stress and ferroptosis downstream of lipid peroxidation. Acts as a regulator of Toll-like receptor 4 (TLR4) signaling triggered by lipopolysaccharide (LPS) during systemic inflammation; directly binds LPS. Involved in leukocyte migration during inflammation by promoting transendothelial migration of macrophages via homotypic binding. Promotes the migration of monocytes across the brain endothelium to central nervous system inflammatory lesions. Also acts as a homophilic transmembrane adhesion molecule involved in various processes such as axonal growth, cell chemotaxis and angiogenesis. Promotes cell adhesion by mediating homophilic interactions via its extracellular N-terminal adhesion motif (N-NAM). Involved in the progression of the inflammatory stress by promoting cell-to-cell interactions between immune cells and endothelial cells. Plays a role in nerve regeneration by promoting maturation of Schwann cells. Acts as a regulator of angiogenesis. Promotes the formation of new vessels by mediating the interaction between capillary pericyte cells and endothelial cells. Also mediates vascular functions in penile tissue as well as vascular formation. Promotes osteoclasts development by enhancing the survival of prefusion osteoclasts. Also involved in striated muscle growth and differentiation. Also involved in cell senescence in a p53/TP53 manner, possibly by acting as an indirect regulator of p53/TP53 mRNA translation. In terms of biological role, secreted form generated by cleavage, which has chemotactic activity. Acts as an anti-inflammatory mediator by promoting monocyte recruitment, thereby ameliorating atherosclerosis. This is Ninjurin-1 from Mus musculus (Mouse).